A 37-amino-acid chain; its full sequence is Large ribosomal subunit protein bL36c (37 aa).

It belongs to the bacterial ribosomal protein bL36 family.

It localises to the plastid. The protein resides in the chloroplast. The polypeptide is Large ribosomal subunit protein bL36c (Tupiella akineta (Green alga)).